Here is a 489-residue protein sequence, read N- to C-terminus: Serotonin-gated chloride channel mod-1 (489 aa).

A signal peptide spans Met-1–Ala-20. At Lys-21–Gly-240 the chain is on the extracellular side. Asn-44, Asn-103, and Asn-144 each carry an N-linked (GlcNAc...) asparagine glycan. 2 residues coordinate serotonin: Tyr-180 and Trp-226. 3 helical membrane-spanning segments follow: residues Phe-241–Phe-261, Val-274–Pro-294, and Val-304–Cys-324. Topologically, residues Tyr-325–Lys-458 are cytoplasmic. A disordered region spans residues Gly-365–Asn-398. Residues His-372–Gly-391 show a composition bias toward polar residues. Residues Phe-459 to Tyr-479 form a helical membrane-spanning segment.

It belongs to the ligand-gated ion channel (TC 1.A.9) family. As to expression, expressed in a subset of muscles, and head and tail neurons, including RME and GABAergic ventral nerve cord neurons. Expressed in AIY, RME, RID, RIF, ASI, DD1-6, and PVN neurons.

It is found in the membrane. It localises to the cell membrane. In terms of biological role, functions as a 5-hydroxytryptamine (serotonin) receptor. This receptor is a ligand-gated anion-specific ion channel, selective for chloride ions. Relays a long-range endocrine signal from the body cavity neurons to modulate distal adipose triglyceride lipase atgl-1 function, via the nuclear receptor nhr-76. Together with the G-protein coupled serotonin receptor ser-1 involved in male mating behavior. May mediate an inhibitory effect of serotonin on egg laying. Involved in regulating locomotory behavior, perhaps by modulating interneuronal signaling, acting in concert with G-protein coupled serotonin receptor ser-4. In the presence of food, plays a role in initiating and extending dwelling behavior, perhaps acting in AIY, RIF and ASI neurons, in opposition to neuropeptide PDF-mediated signaling. Plays a role in aversive learning upon exposure to pathogens such as Gram-negative bacterium P.aeruginosa strain PA14; perhaps acting in interneurons in response to serotonin released by the serotonergic ADF neurons. In Caenorhabditis elegans, this protein is Serotonin-gated chloride channel mod-1.